A 599-amino-acid chain; its full sequence is Putative clathrin assembly protein At1g03050 (599 aa).

Residues 26–162 (GRSASLSELD…DFRMQARHGK (137 aa)) enclose the ENTH domain. 2 disordered regions span residues 332-382 (KQSK…PEEE) and 580-599 (QGHM…TPQY). 2 stretches are compositionally biased toward acidic residues: residues 341-359 (ADED…EQED) and 373-382 (EEDDVKPEEE). A compositionally biased stretch (polar residues) spans 585-599 (LRQNQNQPYSYTPQY).

It is found in the membrane. The protein resides in the clathrin-coated pit. The protein localises to the golgi apparatus. It localises to the cytoplasmic vesicle. Its subcellular location is the clathrin-coated vesicle. The sequence is that of Putative clathrin assembly protein At1g03050 from Arabidopsis thaliana (Mouse-ear cress).